A 593-amino-acid chain; its full sequence is Bifunctional lycopene cyclase/phytoene synthase (593 aa).

The tract at residues 1-242 is lycopene beta-cyclase; it reads MAYDYALVHL…IVFGMAVFDQ (242 aa). The next 7 helical transmembrane spans lie at 8–28, 31–51, 77–97, 117–136, 147–167, 169–189, and 231–251; these read VHLK…YPIF, IHFL…LPWD, IEEL…YILL, IARG…LYGV, YLGL…TVAG, FILT…TVYL, and ILIV…FAFP. The phytoene synthase stretch occupies residues 249 to 593; it reads AFPHLFPKVP…KTVLKALFSA (345 aa).

The protein in the N-terminal section; belongs to the lycopene beta-cyclase family. In the C-terminal section; belongs to the phytoene/squalene synthase family.

It localises to the membrane. It catalyses the reaction all-trans-lycopene = gamma-carotene. It carries out the reaction gamma-carotene = all-trans-beta-carotene. The catalysed reaction is 2 (2E,6E,10E)-geranylgeranyl diphosphate = 15-cis-phytoene + 2 diphosphate. It participates in carotenoid biosynthesis; beta-carotene biosynthesis. The protein operates within carotenoid biosynthesis; phytoene biosynthesis; all-trans-phytoene from geranylgeranyl diphosphate: step 1/1. Its function is as follows. Bifunctional enzyme that catalyzes the reactions from geranylgeranyl diphosphate to phytoene (phytoene synthase) and lycopene to beta-carotene via the intermediate gamma-carotene (lycopene cyclase). The protein is Bifunctional lycopene cyclase/phytoene synthase of Podospora anserina (strain S / ATCC MYA-4624 / DSM 980 / FGSC 10383) (Pleurage anserina).